The primary structure comprises 163 residues: MNDSPKKVLIYTDGACSGNPGSGGYGTVLIYNNHRKELSGGFRLTTNNRMEMMAAIVGLETLTIKCAVTLYTDSRYLVDAITKGWAKKWKANGWKRNAKENAKNPDLWEKLLDLCSQHEVDFVWVKGHAGHQENEYCDRLAVRASQQTNLPSDEVYENKGIET.

Residues 4 to 146 (SPKKVLIYTD…CDRLAVRASQ (143 aa)) enclose the RNase H type-1 domain. Residues D13, E51, D73, and D138 each coordinate Mg(2+).

The protein belongs to the RNase H family. Monomer. It depends on Mg(2+) as a cofactor.

It localises to the cytoplasm. The catalysed reaction is Endonucleolytic cleavage to 5'-phosphomonoester.. Its function is as follows. Endonuclease that specifically degrades the RNA of RNA-DNA hybrids. The chain is Ribonuclease H from Rippkaea orientalis (strain PCC 8801 / RF-1) (Cyanothece sp. (strain PCC 8801)).